Reading from the N-terminus, the 439-residue chain is Homogentisate 1,2-dioxygenase (439 aa).

His293 serves as the catalytic Proton acceptor. Positions 336 and 342 each coordinate Fe cation. 2 residues coordinate homogentisate: Tyr351 and His372. His372 provides a ligand contact to Fe cation.

This sequence belongs to the homogentisate dioxygenase family. Hexamer; dimer of trimers. It depends on Fe cation as a cofactor.

The enzyme catalyses homogentisate + O2 = 4-maleylacetoacetate + H(+). The protein operates within amino-acid degradation; L-phenylalanine degradation; acetoacetate and fumarate from L-phenylalanine: step 4/6. Functionally, involved in the catabolism of homogentisate (2,5-dihydroxyphenylacetate or 2,5-OH-PhAc), a central intermediate in the degradation of phenylalanine and tyrosine. Catalyzes the oxidative ring cleavage of the aromatic ring of homogentisate to yield maleylacetoacetate. In Cupriavidus necator (strain ATCC 17699 / DSM 428 / KCTC 22496 / NCIMB 10442 / H16 / Stanier 337) (Ralstonia eutropha), this protein is Homogentisate 1,2-dioxygenase.